The chain runs to 462 residues: Chromosomal replication initiator protein DnaA (462 aa).

Residues 1–83 form a domain I, interacts with DnaA modulators region; it reads MSLSLWQQCL…LRFEVGSKPA (83 aa). Residues 83–125 form a domain II region; it reads AARAHNNPVTASVSAPVAPVTRSAPMRPSWDNSPAQPELSYRS. The segment at 104–125 is disordered; that stretch reads RSAPMRPSWDNSPAQPELSYRS. Over residues 112-125 the composition is skewed to polar residues; that stretch reads WDNSPAQPELSYRS. Positions 126-342 are domain III, AAA+ region; that stretch reads NVNPKHTFDN…GALNRVIANA (217 aa). 4 residues coordinate ATP: G170, G172, K173, and T174. Residues 343–462 form a domain IV, binds dsDNA region; the sequence is NFTGRAITID…FSNLIRTLSS (120 aa).

Belongs to the DnaA family. Oligomerizes as a right-handed, spiral filament on DNA at oriC.

It localises to the cytoplasm. Its function is as follows. Plays an essential role in the initiation and regulation of chromosomal replication. ATP-DnaA binds to the origin of replication (oriC) to initiate formation of the DNA replication initiation complex once per cell cycle. Binds the DnaA box (a 9 base pair repeat at the origin) and separates the double-stranded (ds)DNA. Forms a right-handed helical filament on oriC DNA; dsDNA binds to the exterior of the filament while single-stranded (ss)DNA is stabiized in the filament's interior. The ATP-DnaA-oriC complex binds and stabilizes one strand of the AT-rich DNA unwinding element (DUE), permitting loading of DNA polymerase. After initiation quickly degrades to an ADP-DnaA complex that is not apt for DNA replication. Binds acidic phospholipids. The protein is Chromosomal replication initiator protein DnaA of Yersinia pseudotuberculosis serotype O:1b (strain IP 31758).